Here is a 250-residue protein sequence, read N- to C-terminus: Isoprenyl transferase (250 aa).

Asp-26 is a catalytic residue. Asp-26 contributes to the Mg(2+) binding site. Substrate is bound by residues Gly-27 to Arg-30, Trp-31, Arg-39, His-43, and Ser-71 to Glu-73. Asn-74 (proton acceptor) is an active-site residue. Substrate is bound by residues Trp-75, Arg-77, Arg-198, and Arg-204–Ser-206. Mg(2+) is bound at residue Glu-217.

This sequence belongs to the UPP synthase family. Homodimer. It depends on Mg(2+) as a cofactor.

Functionally, catalyzes the condensation of isopentenyl diphosphate (IPP) with allylic pyrophosphates generating different type of terpenoids. This is Isoprenyl transferase from Streptococcus agalactiae serotype III (strain NEM316).